We begin with the raw amino-acid sequence, 206 residues long: Small ribosomal subunit protein uS4 (206 aa).

The S4 RNA-binding domain occupies 98–163; it reads MRLDNIVYRL…SEKFKTFVEN (66 aa).

The protein belongs to the universal ribosomal protein uS4 family. Part of the 30S ribosomal subunit. Contacts protein S5. The interaction surface between S4 and S5 is involved in control of translational fidelity.

Its function is as follows. One of the primary rRNA binding proteins, it binds directly to 16S rRNA where it nucleates assembly of the body of the 30S subunit. With S5 and S12 plays an important role in translational accuracy. This chain is Small ribosomal subunit protein uS4, found in Clostridium beijerinckii (strain ATCC 51743 / NCIMB 8052) (Clostridium acetobutylicum).